The following is a 101-amino-acid chain: Small ribosomal subunit protein bS6 (101 aa).

The protein belongs to the bacterial ribosomal protein bS6 family.

Binds together with bS18 to 16S ribosomal RNA. This Pseudarthrobacter chlorophenolicus (strain ATCC 700700 / DSM 12829 / CIP 107037 / JCM 12360 / KCTC 9906 / NCIMB 13794 / A6) (Arthrobacter chlorophenolicus) protein is Small ribosomal subunit protein bS6.